The primary structure comprises 69 residues: Dodecin (69 aa).

3–5 provides a ligand contact to FMN; it reads KVY. Residues Lys-6, Arg-28, and 32–34 each bind CoA; that span reads TLR. The FMN site is built by Asp-37, Trp-38, Arg-45, Gln-57, and Arg-65. 65–67 is a binding site for CoA; sequence RLE.

Belongs to the dodecin family. Homododecamer; four homotrimers assemble to form a dodecameric hollow sphere with an outer diameter of about 60 Angstroms. Flavin dimers are bound between subunits with a stoichiometry of 6 flavin dimers per dodecamer. Besides, trimeric coenzyme A molecules can be bound between subunits. A dodecamer can bind simultaneously 12 flavin and 12 coenzyme A molecules.

Its function is as follows. May function as storage protein that sequesters various flavins and other cofactors, thereby protecting the cell against undesirable reactions mediated by the free cofactors. Binds and sequesters FMN, FAD, lumiflavin and lumichrome, and can also bind coenzyme A. The protein is Dodecin of Thermus thermophilus (strain ATCC 27634 / DSM 579 / HB8).